The sequence spans 312 residues: MNWTELSIIINHEAVELATNILENHGSNGVVIEDSDDLINQPEDKYGEIYALKKEDYPDKGVRLKAYFNEMTYDDKLRQQIKDELLNLDELDQHNIQFSEQIIAETDWENEWKNYFHPFRASKKFTIVPSWETYAKEADEELCIELDPGMAFGTGDHPTTSMCLKAIETYVLPQHSVIDVGTGSGILSIASHLIGVKRIKALDIDEMAVSVAKENFRRNHCETLIEAVPGNLLKDETEKFDIVIANILAHIIDEMIEDAYNTLNEGGYFITSGIIKEKYEGIQSHMERVGFKIISEQHDNGWVCLVGQKVSE.

S-adenosyl-L-methionine is bound by residues Thr160, Gly181, Asp203, and Asn246.

This sequence belongs to the methyltransferase superfamily. PrmA family.

Its subcellular location is the cytoplasm. The catalysed reaction is L-lysyl-[protein] + 3 S-adenosyl-L-methionine = N(6),N(6),N(6)-trimethyl-L-lysyl-[protein] + 3 S-adenosyl-L-homocysteine + 3 H(+). Methylates ribosomal protein L11. The sequence is that of Ribosomal protein L11 methyltransferase from Staphylococcus aureus (strain JH1).